Reading from the N-terminus, the 466-residue chain is Alpha-galacturonidase (466 aa).

11-78 (VKIAYIGGGS…GKWNYETANT (68 aa)) serves as a coordination point for NAD(+). N157 is a substrate binding site. Residue C179 participates in Mn(2+) binding. H180 functions as the Proton donor in the catalytic mechanism. Residue H216 coordinates Mn(2+).

This sequence belongs to the glycosyl hydrolase 4 family. Homotetramer. Requires NAD(+) as cofactor. Mn(2+) is required as a cofactor.

It catalyses the reaction [(1-&gt;4)-alpha-D-galacturonosyl](n) + H2O = alpha-D-galacturonate + [(1-&gt;4)-alpha-D-galacturonosyl](n-1). Alpha-galacturonidase able to catalyze the hydrolysis of the chromogenic substrate p-nitrophenyl-alpha-D-galacturonic acid (pNPalphaGalUA). It is probable that alpha-1,4-di-galacturonate (GalUA(2)) is the naturally occurring substrate. The chain is Alpha-galacturonidase from Lachnoclostridium phytofermentans (strain ATCC 700394 / DSM 18823 / ISDg) (Clostridium phytofermentans).